Consider the following 80-residue polypeptide: U20-ctenitoxin-Pn1a (80 aa).

Intrachain disulfides connect cysteine 3–cysteine 20, cysteine 10–cysteine 26, cysteine 17–cysteine 52, cysteine 19–cysteine 40, cysteine 28–cysteine 38, cysteine 58–cysteine 71, and cysteine 75–cysteine 80.

In terms of tissue distribution, expressed by the venom gland.

The protein resides in the secreted. Its function is as follows. Omega-agatoxin are antagonists of voltage-gated calcium channels (Cav). Induces rapid general flaccid paralysis followed by death when injected into the cerebral ventricle of mice at dose levels of 3 ug per mouse. This Phoneutria nigriventer (Brazilian armed spider) protein is U20-ctenitoxin-Pn1a.